A 198-amino-acid chain; its full sequence is Dephospho-CoA kinase (198 aa).

The region spanning 3–198 is the DPCK domain; the sequence is IVGITGGIGS…LLAKERLELA (196 aa). Position 11–16 (11–16) interacts with ATP; it reads GSGKTT.

Belongs to the CoaE family.

It localises to the cytoplasm. The catalysed reaction is 3'-dephospho-CoA + ATP = ADP + CoA + H(+). It functions in the pathway cofactor biosynthesis; coenzyme A biosynthesis; CoA from (R)-pantothenate: step 5/5. Its function is as follows. Catalyzes the phosphorylation of the 3'-hydroxyl group of dephosphocoenzyme A to form coenzyme A. This is Dephospho-CoA kinase from Dehalococcoides mccartyi (strain ATCC BAA-2266 / KCTC 15142 / 195) (Dehalococcoides ethenogenes (strain 195)).